A 224-amino-acid chain; its full sequence is Redox-sensing transcriptional repressor Rex (224 aa).

Positions 17–56 form a DNA-binding region, H-T-H motif; that stretch reads RYHRYLEELLKNDVKRISSRELSEKMGVTASQIRQDLNNF. 91–96 serves as a coordination point for NAD(+); that stretch reads GAGNLG.

This sequence belongs to the transcriptional regulatory Rex family. In terms of assembly, homodimer.

The protein localises to the cytoplasm. In terms of biological role, modulates transcription in response to changes in cellular NADH/NAD(+) redox state. In Thermoanaerobacter pseudethanolicus (strain ATCC 33223 / 39E) (Clostridium thermohydrosulfuricum), this protein is Redox-sensing transcriptional repressor Rex.